The chain runs to 190 residues: Small ribosomal subunit protein eS7A (190 aa).

Serine 2 bears the N-acetylserine mark. Residues lysine 83, lysine 84, and lysine 124 each participate in a glycyl lysine isopeptide (Lys-Gly) (interchain with G-Cter in ubiquitin) cross-link.

Belongs to the eukaryotic ribosomal protein eS7 family. Component of the small ribosomal subunit (SSU). Mature yeast ribosomes consist of a small (40S) and a large (60S) subunit. The 40S small subunit contains 1 molecule of ribosomal RNA (18S rRNA) and 33 different proteins (encoded by 57 genes). The large 60S subunit contains 3 rRNA molecules (25S, 5.8S and 5S rRNA) and 46 different proteins (encoded by 81 genes). Interacts with snoRNA U3. uS11 interacts with MPP10. Component of the ribosomal small subunit (SSU) processome composed of at least 40 protein subunits and snoRNA U3. In terms of processing, N-terminally acetylated by acetyltransferase NatA. Post-translationally, ubiquitinated at Lys-83 and Lys-84 in response to stalled ribosomes, leading to activation of the No-Go Decay (NGD) pathway: first monoubiquitinated by MOT2/NOT4, followed by formation by HEL2 of 'Lys-63'-linked polyubiquitin chains on monoubiquitin.

It is found in the cytoplasm. The protein localises to the nucleus. It localises to the nucleolus. In terms of biological role, component of the ribosome, a large ribonucleoprotein complex responsible for the synthesis of proteins in the cell. The small ribosomal subunit (SSU) binds messenger RNAs (mRNAs) and translates the encoded message by selecting cognate aminoacyl-transfer RNA (tRNA) molecules. The large subunit (LSU) contains the ribosomal catalytic site termed the peptidyl transferase center (PTC), which catalyzes the formation of peptide bonds, thereby polymerizing the amino acids delivered by tRNAs into a polypeptide chain. The nascent polypeptides leave the ribosome through a tunnel in the LSU and interact with protein factors that function in enzymatic processing, targeting, and the membrane insertion of nascent chains at the exit of the ribosomal tunnel. eS7 is involved in nucleolar processing of pre-18S ribosomal RNA and ribosome assembly. In Saccharomyces cerevisiae (strain ATCC 204508 / S288c) (Baker's yeast), this protein is Small ribosomal subunit protein eS7A.